Consider the following 860-residue polypeptide: Rod cGMP-specific 3',5'-cyclic phosphodiesterase subunit alpha (860 aa).

At Gly2 the chain carries N-acetylglycine. GAF domains lie at 73-222 (QTEK…NLIM) and 254-431 (DIER…GWSV). The PDEase domain occupies 483-816 (EEEELAEILQ…KEWKALADEY (334 aa)). Residue His559 is the Proton donor of the active site. A divalent metal cation contacts are provided by His563, His599, Asp600, and Asp720. The disordered stretch occupies residues 821 to 860 (KVQEEKKQKQQSAKSAAAGNQPGGNPSPGGATTSKSCCIQ). Over residues 830-851 (QQSAKSAAAGNQPGGNPSPGGA) the composition is skewed to low complexity. Cys857 carries the post-translational modification Cysteine methyl ester. Cys857 carries S-farnesyl cysteine lipidation. Positions 858 to 860 (CIQ) are cleaved as a propeptide — removed in mature form.

It belongs to the cyclic nucleotide phosphodiesterase family. In terms of assembly, oligomer composed of two catalytic chains (alpha and beta), an inhibitory chain (gamma) and the delta chain. A divalent metal cation serves as cofactor.

The protein localises to the cell membrane. The protein resides in the cell projection. Its subcellular location is the cilium. It localises to the photoreceptor outer segment. It carries out the reaction 3',5'-cyclic GMP + H2O = GMP + H(+). Its function is as follows. Rod-specific cGMP phosphodiesterase that catalyzes the hydrolysis of 3',5'-cyclic GMP. This protein participates in processes of transmission and amplification of the visual signal. In Homo sapiens (Human), this protein is Rod cGMP-specific 3',5'-cyclic phosphodiesterase subunit alpha.